A 593-amino-acid chain; its full sequence is Capsid protein 1 (593 aa).

The protein belongs to the NCLDV major capsid protein family.

The protein localises to the virion. This Acanthamoeba polyphaga mimivirus (APMV) protein is Capsid protein 1.